The chain runs to 551 residues: Putative ABC transporter ATP-binding protein BT9727_3105 (551 aa).

2 consecutive ABC transporter domains span residues 5 to 243 (AEIN…FRPF) and 293 to 525 (LSAE…SINR). Residues 39 to 46 (GGSGSGKT) and 327 to 334 (GKNGTGKS) each bind ATP.

The protein belongs to the ABC transporter superfamily.

The protein localises to the cell membrane. In terms of biological role, probably part of an ABC transporter complex. Responsible for energy coupling to the transport system. The protein is Putative ABC transporter ATP-binding protein BT9727_3105 of Bacillus thuringiensis subsp. konkukian (strain 97-27).